A 142-amino-acid polypeptide reads, in one-letter code: Nucleoside diphosphate kinase (142 aa).

ATP is bound by residues Lys11, Phe59, Arg87, Thr93, Arg104, and Asn114. His117 functions as the Pros-phosphohistidine intermediate in the catalytic mechanism.

It belongs to the NDK family. Homotetramer. Mg(2+) serves as cofactor.

It is found in the cytoplasm. The enzyme catalyses a 2'-deoxyribonucleoside 5'-diphosphate + ATP = a 2'-deoxyribonucleoside 5'-triphosphate + ADP. It catalyses the reaction a ribonucleoside 5'-diphosphate + ATP = a ribonucleoside 5'-triphosphate + ADP. Functionally, major role in the synthesis of nucleoside triphosphates other than ATP. The ATP gamma phosphate is transferred to the NDP beta phosphate via a ping-pong mechanism, using a phosphorylated active-site intermediate. The sequence is that of Nucleoside diphosphate kinase from Pectobacterium carotovorum subsp. carotovorum (strain PC1).